We begin with the raw amino-acid sequence, 194 residues long: NADH-quinone oxidoreductase subunit B (194 aa).

[4Fe-4S] cluster is bound by residues Cys-73, Cys-74, Cys-138, and Cys-168.

Belongs to the complex I 20 kDa subunit family. NDH-1 is composed of 14 different subunits. Subunits NuoB, C, D, E, F, and G constitute the peripheral sector of the complex. [4Fe-4S] cluster serves as cofactor.

It is found in the cell inner membrane. It catalyses the reaction a quinone + NADH + 5 H(+)(in) = a quinol + NAD(+) + 4 H(+)(out). NDH-1 shuttles electrons from NADH, via FMN and iron-sulfur (Fe-S) centers, to quinones in the respiratory chain. The immediate electron acceptor for the enzyme in this species is believed to be ubiquinone. Couples the redox reaction to proton translocation (for every two electrons transferred, four hydrogen ions are translocated across the cytoplasmic membrane), and thus conserves the redox energy in a proton gradient. In Rhizobium johnstonii (strain DSM 114642 / LMG 32736 / 3841) (Rhizobium leguminosarum bv. viciae), this protein is NADH-quinone oxidoreductase subunit B.